The sequence spans 182 residues: Meiotic recombination protein REC104 (182 aa).

As to quaternary structure, interacts with REC114 and SPO11.

Functionally, potential transcriptional regulator that is required to activate expression of a number of early meiotic genes including HOP1. This is Meiotic recombination protein REC104 (REC104) from Saccharomyces cerevisiae (strain ATCC 204508 / S288c) (Baker's yeast).